Reading from the N-terminus, the 275-residue chain is Putative protein A464R (275 aa).

Residues 51-175 form the RNase III domain; it reads KEDVEYLIGM…LMGAIYFDLG (125 aa). A DRBM domain is found at 201-269; the sequence is NYKDRLLKHT…SKIALHTMGV (69 aa).

It belongs to the ribonuclease III family.

This chain is Putative protein A464R, found in Chlorella (PBCV-1).